The following is a 187-amino-acid chain: Large ribosomal subunit protein uL5 (187 aa).

This sequence belongs to the universal ribosomal protein uL5 family. Part of the 50S ribosomal subunit; part of the 5S rRNA/L5/L18/L25 subcomplex. Contacts the 5S rRNA and the P site tRNA. Forms a bridge to the 30S subunit in the 70S ribosome.

In terms of biological role, this is one of the proteins that bind and probably mediate the attachment of the 5S RNA into the large ribosomal subunit, where it forms part of the central protuberance. In the 70S ribosome it contacts protein S13 of the 30S subunit (bridge B1b), connecting the 2 subunits; this bridge is implicated in subunit movement. Contacts the P site tRNA; the 5S rRNA and some of its associated proteins might help stabilize positioning of ribosome-bound tRNAs. The protein is Large ribosomal subunit protein uL5 of Mycobacterium avium (strain 104).